The following is a 231-amino-acid chain: Aspartate/glutamate leucyltransferase (231 aa).

Belongs to the R-transferase family. Bpt subfamily.

The protein resides in the cytoplasm. The catalysed reaction is N-terminal L-glutamyl-[protein] + L-leucyl-tRNA(Leu) = N-terminal L-leucyl-L-glutamyl-[protein] + tRNA(Leu) + H(+). The enzyme catalyses N-terminal L-aspartyl-[protein] + L-leucyl-tRNA(Leu) = N-terminal L-leucyl-L-aspartyl-[protein] + tRNA(Leu) + H(+). In terms of biological role, functions in the N-end rule pathway of protein degradation where it conjugates Leu from its aminoacyl-tRNA to the N-termini of proteins containing an N-terminal aspartate or glutamate. This chain is Aspartate/glutamate leucyltransferase, found in Pseudoalteromonas atlantica (strain T6c / ATCC BAA-1087).